The primary structure comprises 853 residues: DNA mismatch repair protein MutS (853 aa).

614–621 (GPNMGGKS) provides a ligand contact to ATP.

It belongs to the DNA mismatch repair MutS family.

Functionally, this protein is involved in the repair of mismatches in DNA. It is possible that it carries out the mismatch recognition step. This protein has a weak ATPase activity. The protein is DNA mismatch repair protein MutS of Enterobacter sp. (strain 638).